The chain runs to 932 residues: DNA mismatch repair protein MutS (932 aa).

Position 615–622 (615–622) interacts with ATP; the sequence is GPNMAGKS.

This sequence belongs to the DNA mismatch repair MutS family.

Its function is as follows. This protein is involved in the repair of mismatches in DNA. It is possible that it carries out the mismatch recognition step. This protein has a weak ATPase activity. The polypeptide is DNA mismatch repair protein MutS (Clostridium botulinum (strain Hall / ATCC 3502 / NCTC 13319 / Type A)).